Consider the following 205-residue polypeptide: Peptidyl-tRNA hydrolase (205 aa).

Residue Tyr-14 coordinates tRNA. Residue His-19 is the Proton acceptor of the active site. TRNA contacts are provided by Tyr-68, Asn-70, and Asn-116.

Belongs to the PTH family. Monomer.

Its subcellular location is the cytoplasm. The catalysed reaction is an N-acyl-L-alpha-aminoacyl-tRNA + H2O = an N-acyl-L-amino acid + a tRNA + H(+). In terms of biological role, hydrolyzes ribosome-free peptidyl-tRNAs (with 1 or more amino acids incorporated), which drop off the ribosome during protein synthesis, or as a result of ribosome stalling. Functionally, catalyzes the release of premature peptidyl moieties from peptidyl-tRNA molecules trapped in stalled 50S ribosomal subunits, and thus maintains levels of free tRNAs and 50S ribosomes. This Caulobacter vibrioides (strain ATCC 19089 / CIP 103742 / CB 15) (Caulobacter crescentus) protein is Peptidyl-tRNA hydrolase.